The following is a 309-amino-acid chain: Ubiquitin domain-containing protein UBFD1 (309 aa).

The tract at residues 1–80 (MAAAGAPDGM…VSNGEDAGGG (80 aa)) is disordered. The span at 9 to 19 (GMEEPGMDTEA) shows a compositional bias: acidic residues. Over residues 35-57 (EAEAAAGAAAEDSGAARGSLQPA) the composition is skewed to low complexity. The 76-residue stretch at 84 to 159 (ELVDLKIIWN…IMVVGSTIND (76 aa)) folds into the Ubiquitin-like domain. A disordered region spans residues 171–204 (QQDAKAEENKKEPLCRQKQHRKVLDKGKPEDVMP). Composition is skewed to basic and acidic residues over residues 174–185 (AKAEENKKEPLC) and 192–201 (KVLDKGKPED).

As to quaternary structure, binds polyubiquitin.

In terms of biological role, may play a role as NF-kappa-B regulator. This is Ubiquitin domain-containing protein UBFD1 (UBFD1) from Homo sapiens (Human).